The following is a 929-amino-acid chain: SED5-binding protein 3 (929 aa).

At S15 the chain carries Phosphoserine. Residues 18–28 are compositionally biased toward polar residues; that stretch reads ESTVHTGGASS. A disordered region spans residues 18–52; it reads ESTVHTGGASSKKSRRPHRAYHNFSSGTVPTLGNS. The segment covering 29–38 has biased composition (basic residues); that stretch reads KKSRRPHRAY. Residues 40–52 are compositionally biased toward polar residues; sequence NFSSGTVPTLGNS. Position 72 is a phosphothreonine (T72). A phosphoserine mark is found at S83, S85, S94, S101, and S110. T216 carries the phosphothreonine modification. Residues 220-244 form a zinc finger-like region; sequence CRRCRAYANPKFQFTYDSSVICNIC.

The protein belongs to the SEC23/SEC24 family. SEC24 subfamily. In terms of assembly, COPII is composed of at least five proteins: the SEC23/24 complex, the SEC13/31 complex and SAR1. Binds to SED5. Interacts with GHR1.

Its subcellular location is the cytoplasm. It is found in the golgi apparatus membrane. The protein localises to the endoplasmic reticulum membrane. In terms of biological role, component of the COPII coat, that covers ER-derived vesicles involved in transport from the endoplasmic reticulum to the Golgi apparatus. COPII acts in the cytoplasm to promote the transport of secretory, plasma membrane, and vacuolar proteins from the endoplasmic reticulum to the Golgi complex. The polypeptide is SED5-binding protein 3 (SFB3) (Saccharomyces cerevisiae (strain ATCC 204508 / S288c) (Baker's yeast)).